Here is a 257-residue protein sequence, read N- to C-terminus: Homeobox protein goosecoid (257 aa).

The homeobox DNA-binding region spans 160–219; that stretch reads KRRHRTIFTDEQLEALENLFQETKYPDVGTREQLARKVHLREEKVEVWFKNRRAKWRRQK. The segment at 213-257 is disordered; sequence AKWRRQKRSSSEESENAEKWNKTSSSKASPEKREEEGKSDLDSDS. Residues 241–257 show a composition bias toward basic and acidic residues; sequence SPEKREEEGKSDLDSDS.

It belongs to the paired homeobox family. Bicoid subfamily.

The protein resides in the nucleus. In terms of biological role, regulates chordin (CHRD). May play a role in spatial programing within discrete embryonic fields or lineage compartments during organogenesis. In concert with NKX3-2, plays a role in defining the structural components of the middle ear; required for the development of the entire tympanic ring. Probably involved in the regulatory networks that define neural crest cell fate specification and determine mesoderm cell lineages in mammals. The sequence is that of Homeobox protein goosecoid (GSC) from Gorilla gorilla gorilla (Western lowland gorilla).